A 340-amino-acid chain; its full sequence is GTPase Obg (340 aa).

The Obg domain occupies 1–158; that stretch reads MSFIDEAKVY…KYITLKLKII (158 aa). Positions 159–325 constitute an OBG-type G domain; the sequence is SDIGIIGLPN…LSTLIQYIHK (167 aa). Residues 165–172, 190–194, 211–214, 278–281, and 306–308 contribute to the GTP site; these read GLPNAGKS, FTTLE, DIPG, NKSD, and SSI. Mg(2+)-binding residues include Ser-172 and Thr-192.

This sequence belongs to the TRAFAC class OBG-HflX-like GTPase superfamily. OBG GTPase family. Monomer. The cofactor is Mg(2+).

It localises to the cytoplasm. In terms of biological role, an essential GTPase which binds GTP, GDP and possibly (p)ppGpp with moderate affinity, with high nucleotide exchange rates and a fairly low GTP hydrolysis rate. Plays a role in control of the cell cycle, stress response, ribosome biogenesis and in those bacteria that undergo differentiation, in morphogenesis control. In Ehrlichia chaffeensis (strain ATCC CRL-10679 / Arkansas), this protein is GTPase Obg.